Consider the following 338-residue polypeptide: Protein pelota homolog (338 aa).

This sequence belongs to the eukaryotic release factor 1 family. Pelota subfamily. As to quaternary structure, monomer. A divalent metal cation serves as cofactor.

The protein localises to the cytoplasm. May function in recognizing stalled ribosomes, interact with stem-loop structures in stalled mRNA molecules, and effect endonucleolytic cleavage of the mRNA. May play a role in the release non-functional ribosomes and degradation of damaged mRNAs. Has endoribonuclease activity. In Caldivirga maquilingensis (strain ATCC 700844 / DSM 13496 / JCM 10307 / IC-167), this protein is Protein pelota homolog.